An 85-amino-acid polypeptide reads, in one-letter code: Elongation factor 1-beta (85 aa).

This sequence belongs to the EF-1-beta/EF-1-delta family.

Functionally, promotes the exchange of GDP for GTP in EF-1-alpha/GDP, thus allowing the regeneration of EF-1-alpha/GTP that could then be used to form the ternary complex EF-1-alpha/GTP/AAtRNA. The polypeptide is Elongation factor 1-beta (Methanoregula boonei (strain DSM 21154 / JCM 14090 / 6A8)).